The chain runs to 146 residues: Large-conductance mechanosensitive channel (146 aa).

The next 3 membrane-spanning stretches (helical) occupy residues 21-41 (VGII…ADLI), 44-64 (IIGL…LGDG), and 83-103 (GSFI…FLLV).

Belongs to the MscL family. In terms of assembly, homopentamer.

Its subcellular location is the cell inner membrane. Functionally, channel that opens in response to stretch forces in the membrane lipid bilayer. May participate in the regulation of osmotic pressure changes within the cell. The protein is Large-conductance mechanosensitive channel of Cereibacter sphaeroides (strain ATCC 17029 / ATH 2.4.9) (Rhodobacter sphaeroides).